We begin with the raw amino-acid sequence, 134 residues long: MIIGIGTDLCNIDRITTILGKKESGRFIKRLFSCEEIEASSAFSMTKAAFFAKRFAAKEAFVKALGTGFRHSISFQDISISNDSLGAPKVNISGKAALLLEEKKPPRHTLSIHLSLSDDHPWALAFVVIEACPE.

Mg(2+) is bound by residues Asp8 and Glu59.

Belongs to the P-Pant transferase superfamily. AcpS family. Mg(2+) serves as cofactor.

The protein resides in the cytoplasm. It carries out the reaction apo-[ACP] + CoA = holo-[ACP] + adenosine 3',5'-bisphosphate + H(+). Transfers the 4'-phosphopantetheine moiety from coenzyme A to a Ser of acyl-carrier-protein. In Zymomonas mobilis subsp. mobilis (strain ATCC 31821 / ZM4 / CP4), this protein is Holo-[acyl-carrier-protein] synthase.